Consider the following 306-residue polypeptide: UDP-N-acetylenolpyruvoylglucosamine reductase (306 aa).

Residues 25–188 form the FAD-binding PCMH-type domain; sequence RVGGPADWLF…IEARFRAEPG (164 aa). Arg-168 is a catalytic residue. A compositionally biased stretch (basic and acidic residues) spans 199-214; that stretch reads EQLARRDASQPTKDRS. A disordered region spans residues 199-232; it reads EQLARRDASQPTKDRSAGSTFRNPAGYSSTGRAD. Over residues 215–229 the composition is skewed to polar residues; the sequence is AGSTFRNPAGYSSTG. Ser-217 functions as the Proton donor in the catalytic mechanism. The active site involves Glu-299.

This sequence belongs to the MurB family. FAD is required as a cofactor.

It localises to the cytoplasm. It catalyses the reaction UDP-N-acetyl-alpha-D-muramate + NADP(+) = UDP-N-acetyl-3-O-(1-carboxyvinyl)-alpha-D-glucosamine + NADPH + H(+). It functions in the pathway cell wall biogenesis; peptidoglycan biosynthesis. Functionally, cell wall formation. The sequence is that of UDP-N-acetylenolpyruvoylglucosamine reductase from Paracoccus denitrificans (strain Pd 1222).